The following is a 204-amino-acid chain: Leucyl/phenylalanyl-tRNA--protein transferase (204 aa).

Belongs to the L/F-transferase family.

It is found in the cytoplasm. It catalyses the reaction N-terminal L-lysyl-[protein] + L-leucyl-tRNA(Leu) = N-terminal L-leucyl-L-lysyl-[protein] + tRNA(Leu) + H(+). The enzyme catalyses N-terminal L-arginyl-[protein] + L-leucyl-tRNA(Leu) = N-terminal L-leucyl-L-arginyl-[protein] + tRNA(Leu) + H(+). The catalysed reaction is L-phenylalanyl-tRNA(Phe) + an N-terminal L-alpha-aminoacyl-[protein] = an N-terminal L-phenylalanyl-L-alpha-aminoacyl-[protein] + tRNA(Phe). Functions in the N-end rule pathway of protein degradation where it conjugates Leu, Phe and, less efficiently, Met from aminoacyl-tRNAs to the N-termini of proteins containing an N-terminal arginine or lysine. The polypeptide is Leucyl/phenylalanyl-tRNA--protein transferase (Agrobacterium fabrum (strain C58 / ATCC 33970) (Agrobacterium tumefaciens (strain C58))).